Reading from the N-terminus, the 105-residue chain is Venom metalloprotease inhibitor (105 aa).

The first 21 residues, 1–21 (MFRFVCVLFIALVVFCTTTSA), serve as a signal peptide directing secretion. 5 cysteine pairs are disulfide-bonded: Cys26-Cys61, Cys35-Cys57, Cys39-Cys50, Cys43-Cys83, and Cys63-Cys77. The 58-residue stretch at 26–83 (CNRPNEEYRCGSACQTTCATLGQRCPIMNIRCNDACYCKEGYARYGDDTGMCVSISQC) folds into the TIL domain.

It belongs to the serine protease inhibitor-like (TIL domain-containing) family. As to expression, expressed by the venom gland.

It localises to the secreted. Its function is as follows. Inhibits metalloprotease (human MMP3), trypsin, chymotrypsin, plasmin and microbial serine protease (proteinase K). Exhibits antifibrinolytic activity by binding plasmin and inhibiting it. Does not inhibit elastase, thrombin or microbial serine protease (subtilisin A). The polypeptide is Venom metalloprotease inhibitor (Bombus ignitus (Bumblebee)).